The sequence spans 210 residues: SAP domain-containing ribonucleoprotein (210 aa).

Residue Ala2 is modified to N-acetylalanine. Positions 8–42 (LHKLKLAELKQECLARGLETKGIKQDLINRLQAYL) constitute an SAP domain. Lys10 carries the post-translational modification N6-acetyllysine. Acidic residues predominate over residues 45-64 (HAEEEANEEDVLGDETEEEE). The tract at residues 45-87 (HAEEEANEEDVLGDETEEEEPKPIELPVKEEEPPEKVVDMASE) is disordered. Positions 65–87 (PKPIELPVKEEEPPEKVVDMASE) are enriched in basic and acidic residues. Lys142 carries the post-translational modification N6-acetyllysine. The tract at residues 161-210 (VSSISRKSEDDEKLKKRKERFGIVTSSAGTGTTEDTEAKKRKRAERFGIA) is disordered. At Ser163 the chain carries Phosphoserine. Residues 184-193 (VTSSAGTGTT) show a composition bias toward polar residues.

This sequence belongs to the SAP domain-containing ribonucleoprotein family. Interacts with DDX39A. Interacts with FUS. Interacts (via the C-terminal domain) with DDX39B; the interaction is direct and facilitates RNA binding of DDX39B. Component of the transcription/export (TREX) complex at least composed of ALYREF/THOC4, DDX39B, SARNP/CIP29, CHTOP and the THO subcomplex; TREX seems to have dynamic structure involving ATP-dependent remodeling; in the complex interacts directly with DDX39B in a ATP-dependent manner which bridges it to ALYREF/THOC4.

Its subcellular location is the nucleus. It localises to the nucleus speckle. Its function is as follows. Binds both single-stranded and double-stranded DNA with higher affinity for the single-stranded form. Specifically binds to scaffold/matrix attachment region DNA. Also binds single-stranded RNA. Enhances RNA unwinding activity of DDX39A. May participate in important transcriptional or translational control of cell growth, metabolism and carcinogenesis. Component of the TREX complex which is thought to couple mRNA transcription, processing and nuclear export, and specifically associates with spliced mRNA and not with unspliced pre-mRNA. The TREX complex is recruited to spliced mRNAs by a transcription-independent mechanism, binds to mRNA upstream of the exon-junction complex (EJC) and is recruited in a splicing- and cap-dependent manner to a region near the 5' end of the mRNA where it functions in mRNA export to the cytoplasm via the TAP/NXF1 pathway. Associates with DDX39B, which facilitates RNA binding of DDX39B and likely plays a role in mRNA export. This chain is SAP domain-containing ribonucleoprotein (Sarnp), found in Rattus norvegicus (Rat).